Here is a 311-residue protein sequence, read N- to C-terminus: Aspartate carbamoyltransferase catalytic subunit (311 aa).

2 residues coordinate carbamoyl phosphate: arginine 55 and threonine 56. Lysine 85 provides a ligand contact to L-aspartate. 3 residues coordinate carbamoyl phosphate: arginine 106, histidine 135, and glutamine 138. L-aspartate is bound by residues arginine 168 and arginine 230. 2 residues coordinate carbamoyl phosphate: leucine 268 and proline 269.

It belongs to the aspartate/ornithine carbamoyltransferase superfamily. ATCase family. As to quaternary structure, heterododecamer (2C3:3R2) of six catalytic PyrB chains organized as two trimers (C3), and six regulatory PyrI chains organized as three dimers (R2).

It carries out the reaction carbamoyl phosphate + L-aspartate = N-carbamoyl-L-aspartate + phosphate + H(+). It participates in pyrimidine metabolism; UMP biosynthesis via de novo pathway; (S)-dihydroorotate from bicarbonate: step 2/3. In terms of biological role, catalyzes the condensation of carbamoyl phosphate and aspartate to form carbamoyl aspartate and inorganic phosphate, the committed step in the de novo pyrimidine nucleotide biosynthesis pathway. The chain is Aspartate carbamoyltransferase catalytic subunit from Escherichia coli O139:H28 (strain E24377A / ETEC).